A 270-amino-acid polypeptide reads, in one-letter code: Putative hydro-lyase H16_B1759 (270 aa).

Belongs to the D-glutamate cyclase family.

The protein is Putative hydro-lyase H16_B1759 of Cupriavidus necator (strain ATCC 17699 / DSM 428 / KCTC 22496 / NCIMB 10442 / H16 / Stanier 337) (Ralstonia eutropha).